Reading from the N-terminus, the 457-residue chain is Transcription factor PCF7 (457 aa).

The stretch at 58-84 (STLHYLLQEKERAQQAHEQLQIYQQQQ) forms a coiled coil. The segment at 95–119 (RQPASRGPGGGGGGGDGGGSSGEST) is disordered. Gly residues predominate over residues 101–115 (GPGGGGGGGDGGGSS). Residues 140–198 (RKDRHSKVCTARGLRDRRVRLAAHTAIRFYDVQDRLGYDRPSKAVDWLMRNAKAAIDEL) enclose the TCP domain. Disordered stretches follow at residues 199–231 (PDRA…GFGN) and 263–299 (KSLF…SNQQ). Low complexity-rich tracts occupy residues 210–225 (AAST…ATST) and 268–278 (SSSTASGAASA).

In terms of assembly, forms homodimers and heterodimers.

It localises to the nucleus. In terms of biological role, transcription activator. Binds the promoter core sequence 5'-GGNCC-3'. The polypeptide is Transcription factor PCF7 (PCF7) (Oryza sativa subsp. japonica (Rice)).